A 467-amino-acid chain; its full sequence is 2-succinylbenzoate--CoA ligase (467 aa).

Belongs to the ATP-dependent AMP-binding enzyme family. MenE subfamily.

It catalyses the reaction 2-succinylbenzoate + ATP + CoA = 2-succinylbenzoyl-CoA + AMP + diphosphate. Its pathway is quinol/quinone metabolism; 1,4-dihydroxy-2-naphthoate biosynthesis; 1,4-dihydroxy-2-naphthoate from chorismate: step 5/7. It participates in quinol/quinone metabolism; menaquinone biosynthesis. Functionally, converts 2-succinylbenzoate (OSB) to 2-succinylbenzoyl-CoA (OSB-CoA). The chain is 2-succinylbenzoate--CoA ligase from Listeria monocytogenes serotype 4b (strain F2365).